The following is a 170-amino-acid chain: Adenine phosphoribosyltransferase (170 aa).

The protein belongs to the purine/pyrimidine phosphoribosyltransferase family. As to quaternary structure, homodimer.

It is found in the cytoplasm. It catalyses the reaction AMP + diphosphate = 5-phospho-alpha-D-ribose 1-diphosphate + adenine. The protein operates within purine metabolism; AMP biosynthesis via salvage pathway; AMP from adenine: step 1/1. Its function is as follows. Catalyzes a salvage reaction resulting in the formation of AMP, that is energically less costly than de novo synthesis. The polypeptide is Adenine phosphoribosyltransferase (Maridesulfovibrio salexigens (strain ATCC 14822 / DSM 2638 / NCIMB 8403 / VKM B-1763) (Desulfovibrio salexigens)).